Reading from the N-terminus, the 351-residue chain is Protein Wnt-8a (351 aa).

Residues 1–24 (MGNLFMLWAALGICCAAFSASAWS) form the signal peptide. Residues C54 and C65 are joined by a disulfide bond. The N-linked (GlcNAc...) asparagine glycan is linked to N103. Cystine bridges form between C104–C112, C114–C132, C180–C194, C182–C189, C259–C297, C275–C290, C294–C336, C312–C327, C314–C324, and C319–C320. S186 carries O-palmitoleoyl serine lipidation. N-linked (GlcNAc...) asparagine glycans are attached at residues N262 and N281.

This sequence belongs to the Wnt family. Forms a soluble 1:1 complex with AFM; this prevents oligomerization and is required for prolonged biological activity. The complex with AFM may represent the physiological form in body fluids. Palmitoleoylation is required for efficient binding to frizzled receptors. Depalmitoleoylation leads to Wnt signaling pathway inhibition. Post-translationally, proteolytic processing by TIKI1 and TIKI2 promotes oxidation and formation of large disulfide-bond oligomers, leading to inactivation of WNT8A.

It localises to the secreted. The protein localises to the extracellular space. The protein resides in the extracellular matrix. Its function is as follows. Ligand for members of the frizzled family of seven transmembrane receptors. Plays a role in embryonic patterning. This is Protein Wnt-8a (WNT8A) from Homo sapiens (Human).